The following is a 158-amino-acid chain: Transcription elongation factor GreA (158 aa).

The stretch at 4–75 forms a coiled coil; that stretch reads EKTYPMTQEG…TQLENMIRNA (72 aa).

The protein belongs to the GreA/GreB family.

Functionally, necessary for efficient RNA polymerase transcription elongation past template-encoded arresting sites. The arresting sites in DNA have the property of trapping a certain fraction of elongating RNA polymerases that pass through, resulting in locked ternary complexes. Cleavage of the nascent transcript by cleavage factors such as GreA or GreB allows the resumption of elongation from the new 3'terminus. GreA releases sequences of 2 to 3 nucleotides. This Bacillus cereus (strain ATCC 10987 / NRS 248) protein is Transcription elongation factor GreA.